The sequence spans 397 residues: Elongation factor Tu 1 (397 aa).

In terms of domain architecture, tr-type G spans 10–206; it reads KPHVNIGTIG…AIDTWIPEPV (197 aa). Residues 19–26 are G1; sequence GHVDHGKT. 19 to 26 is a binding site for GTP; that stretch reads GHVDHGKT. T26 lines the Mg(2+) pocket. The G2 stretch occupies residues 61–65; the sequence is GITIS. A G3 region spans residues 82–85; that stretch reads DCPG. GTP is bound by residues 82 to 86 and 137 to 140; these read DCPGH and NKCD. Residues 137–140 form a G4 region; it reads NKCD. The segment at 175-177 is G5; that stretch reads SAL.

This sequence belongs to the TRAFAC class translation factor GTPase superfamily. Classic translation factor GTPase family. EF-Tu/EF-1A subfamily. Monomer.

The protein resides in the cytoplasm. The catalysed reaction is GTP + H2O = GDP + phosphate + H(+). In terms of biological role, GTP hydrolase that promotes the GTP-dependent binding of aminoacyl-tRNA to the A-site of ribosomes during protein biosynthesis. The sequence is that of Elongation factor Tu 1 from Alkaliphilus metalliredigens (strain QYMF).